We begin with the raw amino-acid sequence, 375 residues long: Ribosomal RNA large subunit methyltransferase F (375 aa).

Disordered stretches follow at residues 1–39 and 262–281; these read MKNN…AAVK and NQRK…GKPT. Residues 27–38 are compositionally biased toward basic residues; it reads AKPKRVKKKAAV.

The protein belongs to the methyltransferase superfamily. METTL16/RlmF family.

Its subcellular location is the cytoplasm. The catalysed reaction is adenosine(1618) in 23S rRNA + S-adenosyl-L-methionine = N(6)-methyladenosine(1618) in 23S rRNA + S-adenosyl-L-homocysteine + H(+). Specifically methylates the adenine in position 1618 of 23S rRNA. The chain is Ribosomal RNA large subunit methyltransferase F from Vibrio parahaemolyticus serotype O3:K6 (strain RIMD 2210633).